The primary structure comprises 514 residues: Anthranilate synthase component 1 (514 aa).

L-tryptophan is bound by residues Thr-40 and 291–293 (PYM). 328–329 (GT) is a chorismate binding site. A Mg(2+)-binding site is contributed by Glu-361. Chorismate-binding positions include Tyr-449, Arg-469, 482 to 484 (GAG), and Gly-484. Position 497 (Glu-497) interacts with Mg(2+).

It belongs to the anthranilate synthase component I family. Heterotetramer consisting of two non-identical subunits: a beta subunit (TrpG) and a large alpha subunit (TrpE). It depends on Mg(2+) as a cofactor.

It carries out the reaction chorismate + L-glutamine = anthranilate + pyruvate + L-glutamate + H(+). It participates in amino-acid biosynthesis; L-tryptophan biosynthesis; L-tryptophan from chorismate: step 1/5. With respect to regulation, feedback inhibited by tryptophan. Part of a heterotetrameric complex that catalyzes the two-step biosynthesis of anthranilate, an intermediate in the biosynthesis of L-tryptophan. In the first step, the glutamine-binding beta subunit (TrpG) of anthranilate synthase (AS) provides the glutamine amidotransferase activity which generates ammonia as a substrate that, along with chorismate, is used in the second step, catalyzed by the large alpha subunit of AS (TrpE) to produce anthranilate. In the absence of TrpG, TrpE can synthesize anthranilate directly from chorismate and high concentrations of ammonia. The protein is Anthranilate synthase component 1 (trpE) of Buchnera aphidicola subsp. Rhopalosiphum maidis.